The primary structure comprises 1891 residues: Endoribonuclease Dicer-L (1891 aa).

In terms of domain architecture, Helicase ATP-binding spans 41 to 217 (LLEAALDHNT…DLEEKIQKLE (177 aa)). 54 to 61 (LNSGSGKT) lines the ATP pocket. The DECH box signature appears at 165-168 (DECH). In terms of domain architecture, Helicase C-terminal spans 425 to 594 (SFPSPFTNIL…SIDCGNTESE (170 aa)). A Dicer dsRNA-binding fold domain is found at 622 to 714 (AIGHINRYCA…MPVGKETVKY (93 aa)). A PAZ domain is found at 887-1034 (KFVEDIEKSE…LVPELCAIHP (148 aa)). RNase III domains follow at residues 1248 to 1379 (TSDM…ETSG) and 1635 to 1793 (FENF…MDSG). 6 residues coordinate Mg(2+): glutamate 1292, aspartate 1370, glutamate 1373, glutamate 1674, aspartate 1779, and glutamate 1782. Residues 1818 to 1883 (VPRSPVRELL…ARRALRSLKA (66 aa)) enclose the DRBM domain.

The protein belongs to the helicase family. Dicer subfamily. As to quaternary structure, component of the RISC loading complex (RLC), or micro-RNA (miRNA) loading complex (miRLC), which is composed of dicer1, ago2 and tarbp2; dicer1 and tarbp2 are required to process precursor miRNAs (pre-miRNAs) to mature miRNAs and then load them onto ago2. Note that the trimeric RLC/miRLC is also referred to as RISC. Mg(2+) serves as cofactor. Mn(2+) is required as a cofactor.

The protein localises to the cytoplasm. The enzyme catalyses Endonucleolytic cleavage to 5'-phosphomonoester.. In terms of biological role, double-stranded RNA (dsRNA) endoribonuclease playing a central role in short dsRNA-mediated post-transcriptional gene silencing. Cleaves naturally occurring long dsRNAs and short hairpin pre-microRNAs (miRNA) into fragments of 21 to 23 nucleotides with 3' overhang of two nucleotides, producing respectively short interfering RNAs (siRNA) and mature microRNAs. SiRNAs and miRNAs serve as guide to direct the RNA-induced silencing complex (RISC) to complementary RNAs to degrade them or prevent their translation. Gene silencing mediated by siRNAs, also called RNA interference, controls the elimination of transcripts from mobile and repetitive DNA elements of the genome but also the degradation of exogenous RNA of viral origin for instance. The miRNA pathway on the other side is a mean to specifically regulate the expression of target genes. During embryonic development, at the left-right organizer, post-transcriptionally regulates the expression of dand5 in flow sensor cells. In post-flow stages, acts along with Bicc1 to repress dand5 mRNA translation and decay. Decreased Dand5 expression lifts repression of Nodal and defines leftness by induction of the lateral plate mesoderm Nodal signaling cascade. The sequence is that of Endoribonuclease Dicer-L (dicer1.L) from Xenopus laevis (African clawed frog).